Here is an 881-residue protein sequence, read N- to C-terminus: Valine--tRNA ligase (881 aa).

The short motif at 49 to 59 (PNVTGKLHLGH) is the 'HIGH' region element. The short motif at 526–530 (KMSKS) is the 'KMSKS' region element. Residue Lys529 coordinates ATP. Residues 810-881 (LADLINLDEE…VRQRLADLEK (72 aa)) adopt a coiled-coil conformation.

The protein belongs to the class-I aminoacyl-tRNA synthetase family. ValS type 1 subfamily. As to quaternary structure, monomer.

Its subcellular location is the cytoplasm. The catalysed reaction is tRNA(Val) + L-valine + ATP = L-valyl-tRNA(Val) + AMP + diphosphate. Catalyzes the attachment of valine to tRNA(Val). As ValRS can inadvertently accommodate and process structurally similar amino acids such as threonine, to avoid such errors, it has a 'posttransfer' editing activity that hydrolyzes mischarged Thr-tRNA(Val) in a tRNA-dependent manner. In Bacillus cereus (strain ATCC 10987 / NRS 248), this protein is Valine--tRNA ligase.